A 365-amino-acid polypeptide reads, in one-letter code: Histidinol-phosphate aminotransferase (365 aa).

Position 222 is an N6-(pyridoxal phosphate)lysine (Lys-222).

The protein belongs to the class-II pyridoxal-phosphate-dependent aminotransferase family. Histidinol-phosphate aminotransferase subfamily. Homodimer. Requires pyridoxal 5'-phosphate as cofactor.

It carries out the reaction L-histidinol phosphate + 2-oxoglutarate = 3-(imidazol-4-yl)-2-oxopropyl phosphate + L-glutamate. It functions in the pathway amino-acid biosynthesis; L-histidine biosynthesis; L-histidine from 5-phospho-alpha-D-ribose 1-diphosphate: step 7/9. This is Histidinol-phosphate aminotransferase from Geobacillus thermodenitrificans (strain NG80-2).